Reading from the N-terminus, the 584-residue chain is Arginine--tRNA ligase (584 aa).

Residues 126 to 136 (PNIAKEMHVGH) carry the 'HIGH' region motif.

The protein belongs to the class-I aminoacyl-tRNA synthetase family. Monomer.

It is found in the cytoplasm. The catalysed reaction is tRNA(Arg) + L-arginine + ATP = L-arginyl-tRNA(Arg) + AMP + diphosphate. In Synechococcus elongatus (strain ATCC 33912 / PCC 7942 / FACHB-805) (Anacystis nidulans R2), this protein is Arginine--tRNA ligase.